A 360-amino-acid chain; its full sequence is G-protein coupled receptor 183 (360 aa).

The Extracellular segment spans residues Met1–Arg30. N-linked (GlcNAc...) asparagine glycosylation occurs at Asn7. The helical transmembrane segment at Ile31–Ile56 threads the bilayer. The Cytoplasmic segment spans residues Gln57–Asp76. A helical membrane pass occupies residues Ile77–Phe94. Arg86 serves as a coordination point for 7alpha,25-dihydroxycholesterol. Over Asp95–Arg104 the chain is Extracellular. The cysteines at positions 103 and 180 are disulfide-linked. The helical transmembrane segment at Ile105 to Ile126 threads the bilayer. The 7alpha,25-dihydroxycholesterol site is built by Tyr111 and Tyr115. The interval Ser125–Val133 is interaction with G proteins. Residues Asp127–Lys148 are Cytoplasmic-facing. A helical transmembrane segment spans residues Cys149–Ile167. Residues Asn168–Ser191 lie on the Extracellular side of the membrane. The chain crosses the membrane as a helical span at residues Leu192 to Cys214. Over Tyr215–Lys240 the chain is Cytoplasmic. A helical membrane pass occupies residues Ala241 to Ile264. A 7alpha,25-dihydroxycholesterol-binding site is contributed by Tyr259. At Gln265–Gln286 the chain is on the extracellular side. The helical transmembrane segment at Ile287–Cys311 threads the bilayer. Topologically, residues Lys312–Lys360 are cytoplasmic. Ser327 carries the post-translational modification Phosphoserine. The disordered stretch occupies residues Glu339–Lys360. Polar residues predominate over residues Glu347–Lys360.

This sequence belongs to the G-protein coupled receptor 1 family. Homodimer and heterodimer. Heterodimerizes with CXCR5; leading to modulate the interaction between of CXCL13 and CXCR5.

The protein localises to the cell membrane. G-protein coupled receptor expressed in lymphocytes that acts as a chemotactic receptor for B-cells, T-cells, splenic dendritic cells, monocytes/macrophages and astrocytes. Receptor for oxysterol 7-alpha,25-dihydroxycholesterol (7-alpha,25-OHC) and other related oxysterols. Mediates cell positioning and movement of a number of cells by binding the 7-alpha,25-OHC ligand that forms a chemotactic gradient. Binding of 7-alpha,25-OHC mediates the correct localization of B-cells during humoral immune responses. Guides B-cell movement along the B-cell zone-T-cell zone boundary and later to interfollicular and outer follicular regions. Its specific expression during B-cell maturation helps position B-cells appropriately for mounting T-dependent antibody responses. Collaborates with CXCR5 to mediate B-cell migration; probably by forming a heterodimer with CXCR5 that affects the interaction between of CXCL13 and CXCR5. Also acts as a chemotactic receptor for some T-cells upon binding to 7-alpha,25-OHC ligand. Promotes follicular helper T (Tfh) cells differentiation by positioning activated T-cells at the follicle-T-zone interface, promoting contact of newly activated CD4 T-cells with activated dendritic cells and exposing them to Tfh-cell-promoting inducible costimulator (ICOS) ligand. Expression in splenic dendritic cells is required for their homeostasis, localization and ability to induce B- and T-cell responses: GPR183 acts as a chemotactic receptor in dendritic cells that mediates the accumulation of CD4(+) dendritic cells in bridging channels. Regulates migration of astrocytes and is involved in communication between astrocytes and macrophages. Promotes osteoclast precursor migration to bone surfaces. Signals constitutively through G(i)-alpha, but not G(s)-alpha or G(q)-alpha. Signals constitutively also via MAPK1/3 (ERK1/2). The polypeptide is G-protein coupled receptor 183 (GPR183) (Bos taurus (Bovine)).